Here is a 117-residue protein sequence, read N- to C-terminus: Large ribosomal subunit protein uL18 (117 aa).

This sequence belongs to the universal ribosomal protein uL18 family. As to quaternary structure, part of the 50S ribosomal subunit; part of the 5S rRNA/L5/L18/L25 subcomplex. Contacts the 5S and 23S rRNAs.

Its function is as follows. This is one of the proteins that bind and probably mediate the attachment of the 5S RNA into the large ribosomal subunit, where it forms part of the central protuberance. This is Large ribosomal subunit protein uL18 from Photorhabdus laumondii subsp. laumondii (strain DSM 15139 / CIP 105565 / TT01) (Photorhabdus luminescens subsp. laumondii).